A 677-amino-acid chain; its full sequence is Galactocerebrosidase (677 aa).

The N-terminal stretch at M1–A33 is a signal peptide. Residues T101, W143, and N189 each contribute to the substrate site. The Proton donor/acceptor role is filled by E190. Residue E265 is the Nucleophile of the active site. C278 and C385 form a disulfide bridge. N-linked (GlcNAc...) asparagine glycosylation is found at N291, N370, and N381. Substrate is bound at residue R387. N394, N399, N424, N441, N509, N549, and N630 each carry an N-linked (GlcNAc...) asparagine glycan.

It belongs to the glycosyl hydrolase 59 family.

Its subcellular location is the lysosome. The enzyme catalyses a beta-D-galactosyl-(1&lt;-&gt;1')-N-acylsphing-4-enine + H2O = an N-acylsphing-4-enine + D-galactose. It carries out the reaction beta-D-galactosyl-(1&lt;-&gt;1)-sphing-4-enine + H2O = sphing-4-enine + D-galactose. The catalysed reaction is a D-galactosylceramide + H2O = an N-acyl-sphingoid base + D-galactose. Functionally, hydrolyzes the galactose ester bonds of glycolipids such as galactosylceramide and galactosylsphingosine. The polypeptide is Galactocerebrosidase (Xenopus laevis (African clawed frog)).